The following is a 162-amino-acid chain: Ribosome-binding factor A (162 aa).

Residues 124 to 162 (ARVRSGAKPAGEADPYRESGSGVEPGRDGSIGDDDQPEY) form a disordered region.

This sequence belongs to the RbfA family. In terms of assembly, monomer. Binds 30S ribosomal subunits, but not 50S ribosomal subunits or 70S ribosomes.

It localises to the cytoplasm. In terms of biological role, one of several proteins that assist in the late maturation steps of the functional core of the 30S ribosomal subunit. Associates with free 30S ribosomal subunits (but not with 30S subunits that are part of 70S ribosomes or polysomes). Required for efficient processing of 16S rRNA. May interact with the 5'-terminal helix region of 16S rRNA. The sequence is that of Ribosome-binding factor A from Mycolicibacterium paratuberculosis (strain ATCC BAA-968 / K-10) (Mycobacterium paratuberculosis).